The sequence spans 179 residues: UPF0227 protein VS_2073 (179 aa).

Belongs to the UPF0227 family.

The protein is UPF0227 protein VS_2073 of Vibrio atlanticus (strain LGP32) (Vibrio splendidus (strain Mel32)).